The following is a 493-amino-acid chain: Acetyl-coenzyme A carboxylase carboxyl transferase subunit beta (493 aa).

The 263-residue stretch at 231–493 (LWVQCENCYG…FKLHAFFPLN (263 aa)) folds into the CoA carboxyltransferase N-terminal domain. Residues Cys-235, Cys-238, Cys-254, and Cys-257 each contribute to the Zn(2+) site. The C4-type zinc finger occupies 235–257 (CENCYGLNYKKFLKSKINLCEQC).

It belongs to the AccD/PCCB family. In terms of assembly, acetyl-CoA carboxylase is a heterohexamer composed of biotin carboxyl carrier protein, biotin carboxylase and 2 subunits each of ACCase subunit alpha and ACCase plastid-coded subunit beta (accD). Zn(2+) serves as cofactor.

The protein localises to the plastid stroma. It catalyses the reaction N(6)-carboxybiotinyl-L-lysyl-[protein] + acetyl-CoA = N(6)-biotinyl-L-lysyl-[protein] + malonyl-CoA. Its pathway is lipid metabolism; malonyl-CoA biosynthesis; malonyl-CoA from acetyl-CoA: step 1/1. In terms of biological role, component of the acetyl coenzyme A carboxylase (ACC) complex. Biotin carboxylase (BC) catalyzes the carboxylation of biotin on its carrier protein (BCCP) and then the CO(2) group is transferred by the transcarboxylase to acetyl-CoA to form malonyl-CoA. In Epifagus virginiana (Beechdrops), this protein is Acetyl-coenzyme A carboxylase carboxyl transferase subunit beta.